The following is a 245-amino-acid chain: Small ribosomal subunit protein uS3 (245 aa).

Residues 39 to 108 form the KH type-2 domain; that stretch reads IRNYIKKNYY…SVFVNVQEVK (70 aa).

This sequence belongs to the universal ribosomal protein uS3 family. As to quaternary structure, part of the 30S ribosomal subunit. Forms a tight complex with proteins S10 and S14.

Functionally, binds the lower part of the 30S subunit head. Binds mRNA in the 70S ribosome, positioning it for translation. In Dictyoglomus turgidum (strain DSM 6724 / Z-1310), this protein is Small ribosomal subunit protein uS3.